The chain runs to 415 residues: Phosphoribosylamine--glycine ligase (415 aa).

The region spanning 108 to 311 (KKIMEKYNIP…LMQHIIDLDE (204 aa)) is the ATP-grasp domain. An ATP-binding site is contributed by 134–191 (IENCEFPVVVKKDGLAAGKGVIIADTIEAARSAIEIMYGDEEEGTVVFETFLEGEEFS). Glu-281 and Asn-283 together coordinate Mg(2+).

The protein belongs to the GARS family. Requires Mg(2+) as cofactor. The cofactor is Mn(2+).

It carries out the reaction 5-phospho-beta-D-ribosylamine + glycine + ATP = N(1)-(5-phospho-beta-D-ribosyl)glycinamide + ADP + phosphate + H(+). Its pathway is purine metabolism; IMP biosynthesis via de novo pathway; N(1)-(5-phospho-D-ribosyl)glycinamide from 5-phospho-alpha-D-ribose 1-diphosphate: step 2/2. The sequence is that of Phosphoribosylamine--glycine ligase from Staphylococcus aureus (strain MRSA252).